The sequence spans 896 residues: NEDD4-binding protein 1 (896 aa).

The KH-like domain maps to 59–143; the sequence is QEAVHSAKEY…IQQFVKLFEN (85 aa). A Phosphoserine modification is found at S226. At T242 the chain carries Phosphothreonine. S258 and S300 each carry phosphoserine. Disordered stretches follow at residues 403-430 and 488-507; these read YPET…PKKT and ETDG…VNFV. Polar residues predominate over residues 414–430; it reads VYSSTNELTTDSTPKKT. Residue S562 is modified to Phosphoserine. Positions 617–769 constitute an RNase NYN domain; it reads LKHIVIDGSN…LGRSGPRLEE (153 aa). The segment at 801–821 is disordered; sequence GTQAASTSHQPPTRIQGAPSS. A compositionally biased stretch (polar residues) spans 803 to 813; sequence QAASTSHQPPT. Residues 849 to 896 are coCUN; it reads RSSAETNELREALLKIFPDSEQRLKIDQILVAHPYMKDLNALSAMVLD.

Belongs to the N4BP1 family. In terms of assembly, interacts with NEDD4. Interacts with ITCH (via WW domain 2). Proteolytically cleaved by CASP8 downstream of TLR3 or TLR4, leading to its inactivation. Mainly cleaved at Asp-490 by CASP8. Cleaved by caspase-like protein MALT1 in T-cells following TCR-mediated activation, leading to its inactivation and subsequent viral reactivation during HIV-1 infection. Post-translationally, mono- and polyubiquitinated on the CoCUN region. Monoubiquitinated by NEDD4. Polyubiquitinated, leading to its degradation by the proteasome. Sumoylated with SUMO1, abrogating polyubiquitination and subsequent degradation. Desumoylated by SENP1, leading to accumulation in PML nuclear bodies. As to expression, detected in heart, lung, brain, liver, skeletal muscle, pancreas, kidney, spleen, testis and ovary.

It localises to the cytoplasm. Its subcellular location is the cytosol. It is found in the nucleus. The protein resides in the nucleolus. The protein localises to the PML body. Proteolytic cleavage by CASP8 or MALT1 leads to its inactivation. Its function is as follows. Potent suppressor of cytokine production that acts as a regulator of innate immune signaling and inflammation. Acts as a key negative regulator of select cytokine and chemokine responses elicited by TRIF-independent Toll-like receptors (TLRs), thereby limiting inflammatory cytokine responses to minor insults. In response to more threatening pathogens, cleaved by CASP8 downstream of TLR3 or TLR4, leading to its inactivation, thereby allowing production of inflammatory cytokines. Acts as a restriction factor against some viruses, such as HIV-1: restricts HIV-1 replication by binding to HIV-1 mRNAs and mediating their degradation via its ribonuclease activity. Also acts as an inhibitor of the E3 ubiquitin-protein ligase ITCH: acts by interacting with the second WW domain of ITCH, leading to compete with ITCH's substrates and impairing ubiquitination of substrates. This chain is NEDD4-binding protein 1, found in Homo sapiens (Human).